Consider the following 466-residue polypeptide: Dynein axonemal assembly factor 11 (466 aa).

4 LRR repeats span residues 22–43 (SLEELSLHQQEIERLEHIDKWC), 45–66 (DLKILYLQNNLIGKIENVSKLK), 67–88 (KLEYLNLALNNIEKIENLEGCE), and 89–110 (ELAKLDLTVNFIGELSSIKNLQ). The LRRCT domain occupies 123 to 161 (NPCASFDHYREFVVATLPQLKWLDGKEIEPSERIKALQD). Residues 178–204 (LKRAKLKEEAQRKHQEEDKNEDKRSNA) adopt a coiled-coil conformation. A compositionally biased stretch (basic and acidic residues) spans 185 to 202 (EEAQRKHQEEDKNEDKRS). Disordered stretches follow at residues 185-206 (EEAQRKHQEEDKNEDKRSNAGF), 268-288 (MEKQRKKQEKLSEKKKKVKPP), and 391-466 (AFKS…PPLI). Positions 269–287 (EKQRKKQEKLSEKKKKVKP) are enriched in basic residues. One can recognise a CS domain in the interval 301–396 (VNEPKIDFSL…GGQRAFKSMK (96 aa)). 2 stretches are compositionally biased toward basic and acidic residues: residues 398–425 (TSDRSREQTNTRSKHMEKLEVDPSKHSF) and 433–445 (QEKKHTPRRRPEP). Over residues 450 to 460 (SEEDPTFEDNP) the composition is skewed to acidic residues.

The protein belongs to the tilB family. In terms of assembly, interacts (via CS domain) with ZMYND10 (via C-terminus). In terms of tissue distribution, expressed predominantly in testis and in nasal epithelial cells.

The protein localises to the cytoplasm. It localises to the cell projection. Its subcellular location is the cilium. The protein resides in the dynein axonemal particle. It is found in the flagellum. Functionally, involved in dynein arm assembly, is important for expression and transporting outer dynein arm (ODA) proteins from the cytoplasm to the cilia. Acts as a crucial component in the formation and motility of spermatozoal flagella. In Homo sapiens (Human), this protein is Dynein axonemal assembly factor 11.